Consider the following 316-residue polypeptide: MKIVKISPRGYCYGVVDAMVIARNAALDKSLPRPIYILGMIVHNKHVTDAFEEDGIITLDGPSRLEILDKIDSGTVIFTAHGVSPEVKQRAKEKGLTTIDATCPDVTKTHDLIEAKKAEGYHVIYIGKKNHPEPEGAVGIAPDIVHLIEKADDLKTLEIPTDKILVTNQTTMSQWDVQHLMEDIQKKFPTAEFHKEICLATQVRQEAVAKQADVADLTIVVGDPKSNNSNRLAQVSQEIAGTTAYRVADVSEIQLEWLQGVENVAVTAGASTPTPITKEVIAFLDQYDPMNPATWDRIRKVPLQKILPRVKVKKEQ.

Position 12 (Cys-12) interacts with [4Fe-4S] cluster. (2E)-4-hydroxy-3-methylbut-2-enyl diphosphate is bound by residues His-43 and His-81. Residues His-43 and His-81 each contribute to the dimethylallyl diphosphate site. Isopentenyl diphosphate-binding residues include His-43 and His-81. Cys-103 serves as a coordination point for [4Fe-4S] cluster. His-131 is a (2E)-4-hydroxy-3-methylbut-2-enyl diphosphate binding site. His-131 contributes to the dimethylallyl diphosphate binding site. Residue His-131 participates in isopentenyl diphosphate binding. Catalysis depends on Glu-133, which acts as the Proton donor. (2E)-4-hydroxy-3-methylbut-2-enyl diphosphate is bound at residue Thr-170. Cys-198 contacts [4Fe-4S] cluster. Residues Ser-226, Asn-228, and Ser-271 each coordinate (2E)-4-hydroxy-3-methylbut-2-enyl diphosphate. 3 residues coordinate dimethylallyl diphosphate: Ser-226, Asn-228, and Ser-271. Isopentenyl diphosphate is bound by residues Ser-226, Asn-228, and Ser-271.

This sequence belongs to the IspH family. The cofactor is [4Fe-4S] cluster.

The enzyme catalyses isopentenyl diphosphate + 2 oxidized [2Fe-2S]-[ferredoxin] + H2O = (2E)-4-hydroxy-3-methylbut-2-enyl diphosphate + 2 reduced [2Fe-2S]-[ferredoxin] + 2 H(+). It catalyses the reaction dimethylallyl diphosphate + 2 oxidized [2Fe-2S]-[ferredoxin] + H2O = (2E)-4-hydroxy-3-methylbut-2-enyl diphosphate + 2 reduced [2Fe-2S]-[ferredoxin] + 2 H(+). It participates in isoprenoid biosynthesis; dimethylallyl diphosphate biosynthesis; dimethylallyl diphosphate from (2E)-4-hydroxy-3-methylbutenyl diphosphate: step 1/1. The protein operates within isoprenoid biosynthesis; isopentenyl diphosphate biosynthesis via DXP pathway; isopentenyl diphosphate from 1-deoxy-D-xylulose 5-phosphate: step 6/6. Functionally, catalyzes the conversion of 1-hydroxy-2-methyl-2-(E)-butenyl 4-diphosphate (HMBPP) into a mixture of isopentenyl diphosphate (IPP) and dimethylallyl diphosphate (DMAPP). Acts in the terminal step of the DOXP/MEP pathway for isoprenoid precursor biosynthesis. This Bacillus mycoides (strain KBAB4) (Bacillus weihenstephanensis) protein is 4-hydroxy-3-methylbut-2-enyl diphosphate reductase.